A 174-amino-acid chain; its full sequence is Co-chaperone protein HscB homolog (174 aa).

A J domain is found at 2–74 (NYFELFSFTP…ILRAEHMLSL (73 aa)).

Belongs to the HscB family. As to quaternary structure, interacts with HscA and stimulates its ATPase activity.

Co-chaperone involved in the maturation of iron-sulfur cluster-containing proteins. Seems to help targeting proteins to be folded toward HscA. This is Co-chaperone protein HscB homolog from Shewanella woodyi (strain ATCC 51908 / MS32).